The chain runs to 721 residues: Polyribonucleotide nucleotidyltransferase (721 aa).

Mg(2+) contacts are provided by Asp495 and Asp501. The 60-residue stretch at Pro562–Ile621 folds into the KH domain. In terms of domain architecture, S1 motif spans Gly631 to Arg699. The tract at residues Gly700–Asn721 is disordered.

This sequence belongs to the polyribonucleotide nucleotidyltransferase family. The cofactor is Mg(2+).

Its subcellular location is the cytoplasm. The catalysed reaction is RNA(n+1) + phosphate = RNA(n) + a ribonucleoside 5'-diphosphate. Involved in mRNA degradation. Catalyzes the phosphorolysis of single-stranded polyribonucleotides processively in the 3'- to 5'-direction. This chain is Polyribonucleotide nucleotidyltransferase, found in Prochlorococcus marinus (strain MIT 9303).